Here is a 505-residue protein sequence, read N- to C-terminus: Salutaridine synthase (505 aa).

Residues 10–30 (DFWMIACTVIIVFALVKFMFS) form a helical membrane-spanning segment. Residue Cys444 coordinates heme.

This sequence belongs to the cytochrome P450 family. The cofactor is heme.

It localises to the endoplasmic reticulum membrane. The catalysed reaction is (R)-reticuline + reduced [NADPH--hemoprotein reductase] + O2 = salutaridine + oxidized [NADPH--hemoprotein reductase] + 2 H2O + H(+). Cytochrome P450 monooxygenase involved in biosynthesis of morphinan-type benzylisoquinoline and opiate alkaloids natural products. Catalyzes the formation of the morphinan alkaloid salutaridine by intramolecular phenol oxidation of (R)-reticuline without the incorporation of oxygen into the product. Can also use (R)-norreticuline as substrate. This is Salutaridine synthase from Papaver somniferum (Opium poppy).